The chain runs to 436 residues: UDP-N-acetylglucosamine 1-carboxyvinyltransferase (436 aa).

Phosphoenolpyruvate is bound at residue 22–23 (KN). UDP-N-acetyl-alpha-D-glucosamine is bound at residue R96. C120 (proton donor) is an active-site residue. 2-(S-cysteinyl)pyruvic acid O-phosphothioketal is present on C120. Residues 125–129 (RPIDL), D309, and I331 each bind UDP-N-acetyl-alpha-D-glucosamine.

This sequence belongs to the EPSP synthase family. MurA subfamily.

Its subcellular location is the cytoplasm. It catalyses the reaction phosphoenolpyruvate + UDP-N-acetyl-alpha-D-glucosamine = UDP-N-acetyl-3-O-(1-carboxyvinyl)-alpha-D-glucosamine + phosphate. It participates in cell wall biogenesis; peptidoglycan biosynthesis. Cell wall formation. Adds enolpyruvyl to UDP-N-acetylglucosamine. This chain is UDP-N-acetylglucosamine 1-carboxyvinyltransferase, found in Acidobacterium capsulatum (strain ATCC 51196 / DSM 11244 / BCRC 80197 / JCM 7670 / NBRC 15755 / NCIMB 13165 / 161).